The primary structure comprises 5207 residues: E3 ubiquitin-protein ligase RNF213 (5207 aa).

Disordered stretches follow at residues methionine 1–glutamine 20 and proline 27–valine 365. Residues serine 34 to serine 43 show a composition bias toward polar residues. Over residues lysine 89 to asparagine 100 the composition is skewed to basic residues. Composition is skewed to low complexity over residues lysine 101–proline 117 and serine 136–proline 157. Residues serine 188–glutamine 197 show a composition bias toward polar residues. A phosphoserine mark is found at serine 208 and serine 217. The segment covering glycine 248–alanine 266 has biased composition (polar residues). 3 stretches are compositionally biased toward basic and acidic residues: residues alanine 285–glutamine 294, histidine 309–asparagine 346, and lysine 353–glutamate 362. Positions glutamate 343–serine 374 form a coiled coil. Residue lysine 1151 forms a Glycyl lysine isopeptide (Lys-Gly) (interchain with G-Cter in SUMO2) linkage. Position 1258 is a phosphoserine (serine 1258). ATP contacts are provided by residues glycine 1995–leucine 2000, glutamate 2098, aspartate 2155, and arginine 2216. Serine 2273 carries the post-translational modification Phosphoserine. ATP-binding residues include lysine 2499 and serine 2574. Zn(2+) contacts are provided by cysteine 3997, cysteine 4000, cysteine 4012, histidine 4014, cysteine 4017, cysteine 4020, cysteine 4032, cysteine 4035, cysteine 4505, and histidine 4509. An RING-type zinc finger spans residues cysteine 3997–leucine 4036. The segment at methionine 4483–threonine 4555 adopts an RZ-type zinc-finger fold. The Nucleophile; for E3 ubiquitin-lipopolysaccharide ligase activity role is filled by cysteine 4516. The Zn(2+) site is built by cysteine 4525 and cysteine 4528.

The protein belongs to the AAA ATPase family. As to quaternary structure, monomer. Interacts with UBE2L3/UBCH7; UBE2L3/UBCH7 is the most efficient ubiquitin-conjugating enzyme E2 for the ubiquitin ligase activity. Interacts with UBE2N/UBC13; promoting 'Lys-63'-linked ubiquitination of target proteins. In terms of assembly, (Microbial infection) Interacts with M.tuberculosis protein Rv3655c, which impairs caspase-8 activation and suppresses macrophage apoptosis by blocking the extrinsic pathway. In terms of processing, autoubiquitinated. In terms of tissue distribution, widely expressed (at protein level). As to expression, major isoform detected in all tissues examined. Minor isoform with restricted expression.

The protein localises to the cytoplasm. It is found in the cytosol. It localises to the lipid droplet. The catalysed reaction is S-ubiquitinyl-[E2 ubiquitin-conjugating enzyme]-L-cysteine + [acceptor protein]-L-lysine = [E2 ubiquitin-conjugating enzyme]-L-cysteine + N(6)-ubiquitinyl-[acceptor protein]-L-lysine.. It catalyses the reaction ATP + H2O = ADP + phosphate + H(+). Its pathway is protein modification; protein ubiquitination. Its function is as follows. Atypical E3 ubiquitin ligase that can catalyze ubiquitination of both proteins and lipids, and which is involved in various processes, such as lipid metabolism, angiogenesis and cell-autonomous immunity. Acts as a key immune sensor by catalyzing ubiquitination of the lipid A moiety of bacterial lipopolysaccharide (LPS) via its RZ-type zinc-finger: restricts the proliferation of cytosolic bacteria, such as Salmonella, by generating the bacterial ubiquitin coat through the ubiquitination of LPS. Also acts indirectly by mediating the recruitment of the LUBAC complex, which conjugates linear polyubiquitin chains. Ubiquitination of LPS triggers cell-autonomous immunity, such as antibacterial autophagy, leading to degradation of the microbial invader. Involved in lipid metabolism by regulating fat storage and lipid droplet formation; act by inhibiting the lipolytic process. Also regulates lipotoxicity by inhibiting desaturation of fatty acids. Also acts as an E3 ubiquitin-protein ligase via its RING-type zinc finger: mediates 'Lys-63'-linked ubiquitination of target proteins. Involved in the non-canonical Wnt signaling pathway in vascular development: acts by mediating ubiquitination and degradation of FLNA and NFATC2 downstream of RSPO3, leading to inhibit the non-canonical Wnt signaling pathway and promoting vessel regression. Also has ATPase activity; ATPase activity is required for ubiquitination of LPS. The protein is E3 ubiquitin-protein ligase RNF213 of Homo sapiens (Human).